The sequence spans 293 residues: DNA-directed RNA polymerase III subunit rpc6 (293 aa).

This sequence belongs to the eukaryotic RPC34/RPC39 RNA polymerase subunit family. As to quaternary structure, component of the RNA polymerase III (Pol III) complex.

It localises to the nucleus. Functionally, DNA-dependent RNA polymerase catalyzes the transcription of DNA into RNA using the four ribonucleoside triphosphates as substrates. Specific peripheric component of RNA polymerase III which synthesizes small RNAs, such as 5S rRNA and tRNAs. May direct RNA Pol III binding to the TFIIIB-DNA complex. This Dictyostelium discoideum (Social amoeba) protein is DNA-directed RNA polymerase III subunit rpc6 (polr3f).